A 117-amino-acid chain; its full sequence is Eukaryotic translation initiation factor 4E-binding protein (117 aa).

Phosphothreonine occurs at positions 37 and 46. The YXXXXLphi motif; atypical signature appears at 54–60; it reads YERAFMK. Ser65 carries the phosphoserine modification. Phosphothreonine is present on Thr70.

The protein belongs to the eIF4E-binding protein family. Hypophosphorylated Thor/4E-BP competes with eIF4G1 to interact with eIF4E1; insulin stimulated Akt1 or Tor phosphorylation of Thor/4E-BP causes dissociation of the complex allowing eIF4G1 to bind and consequent initiation of translation. Phosphorylation at Thr-37, Thr-46, Ser-65 and Thr-70, corresponding to the hyperphosphorylated form, impairs its ability to prevent the interaction between eIF4G1 and eIF4E1, without affecting its interaction with free eIF4E1. Phosphorylated in rtesponse to insulin. Phosphorylation at Thr-46 is regulated by Tor and constitutes the major phosphorylation event that regulates activity. In terms of tissue distribution, widely expressed.

Repressor of translation initiation that regulates eIF4E1 activity by preventing its assembly into the eIF4F complex. Hypophosphorylated form competes with eIF4G1 and strongly binds to eIF4E1, leading to repress translation. In contrast, hyperphosphorylated form dissociates from eIF4E1, allowing interaction between eIF4G1 and eIF4E1, leading to initiation of translation. Acts as a regulator of various biological processes, such as innate immunity, cell growth or synaptic transmission. Acts downstream of phosphoinositide-3-kinase (PI3K) to regulate cell growth. Extends lifespan upon dietary restriction by regulating the mitochondrial translation. Acts as a regulator of lifespan in response to cold by regulating the mitochondrial translation. Acts as a negative regulator of presynaptic release of neurotransmitter in motor neurons: Thor expression is induced in response to insulin signaling, leading to prevent of translation of complexin (cpx), a protein known to regulate the exocytosis of synaptic vesicles. Acts as a negative regulator of synaptic strength at the neuromuscular junction: Thor expression in response to acute fasting prevents translation, thereby suppressing retrograde synaptic enhancement. The sequence is that of Eukaryotic translation initiation factor 4E-binding protein from Drosophila melanogaster (Fruit fly).